Consider the following 458-residue polypeptide: A-type ATP synthase subunit B (458 aa).

Belongs to the ATPase alpha/beta chains family. As to quaternary structure, has multiple subunits with at least A(3), B(3), C, D, E, F, H, I and proteolipid K(x).

It is found in the cell membrane. Component of the A-type ATP synthase that produces ATP from ADP in the presence of a proton gradient across the membrane. The B chain is a regulatory subunit. This is A-type ATP synthase subunit B from Methanocella arvoryzae (strain DSM 22066 / NBRC 105507 / MRE50).